A 450-amino-acid polypeptide reads, in one-letter code: Ceramide glucosyltransferase (450 aa).

The Lumenal portion of the chain corresponds to 1-8 (MSDSGTLS). The helical transmembrane segment at 9-29 (LIGGIVFLVLWVVVWSICLLG) threads the bilayer. Residues 30–337 (WRTARIRYAH…IRVRKKMTLA (308 aa)) are Cytoplasmic-facing. Asp-96 is a short sequence motif (D1). Asp-148 is a short sequence motif (D2). Position 286 (Asp-286) is a short sequence motif, D3. Asp-286 serves as the catalytic Proton acceptor. The short motif at 323 to 327 (RRVRW) is the (Q/R)XXRW element. Residues 338–358 (ATLLEPLTESIISGLYGAWAI) form a helical membrane-spanning segment. The Lumenal portion of the chain corresponds to 359–361 (SRL). Residues 362–382 (LGGNILPLFLLHMAAWISVDI) form a helical membrane-spanning segment. Residues 383–401 (STKRALETNIKGIGPPESK) are Cytoplasmic-facing. The helical transmembrane segment at 402 to 422 (VTFLMAWAARECLALPIWMLA) threads the bilayer. The Lumenal portion of the chain corresponds to 423 to 450 (MTSSEVVWRGQKYKIIASGEAIRLGDRN).

The protein belongs to the glycosyltransferase 2 family.

It is found in the golgi apparatus membrane. It catalyses the reaction an N-acylsphing-4-enine + UDP-alpha-D-glucose = a beta-D-glucosyl-(1&lt;-&gt;1')-N-acylsphing-4-enine + UDP + H(+). The protein operates within lipid metabolism; sphingolipid metabolism. Functionally, catalyzes the final step in the biosynthesis of the membrane lipid glucosylceramide (GluCer), the transfer of glucose to ceramide. Glucosylceramides play important roles in growth, differentiation and pathogenicity. Essential factor in determining the success of fungal infection by regulating survival of yeast cells during the initial colonization of the host lung. The polypeptide is Ceramide glucosyltransferase (Cryptococcus neoformans var. grubii serotype A (strain H99 / ATCC 208821 / CBS 10515 / FGSC 9487) (Filobasidiella neoformans var. grubii)).